The primary structure comprises 494 residues: Cobyric acid synthase (494 aa).

The GATase cobBQ-type domain maps to 249–443 (EINVTILRLP…LHGIFDNGAW (195 aa)). The active-site Nucleophile is Cys-330. His-435 is a catalytic residue.

Belongs to the CobB/CobQ family. CobQ subfamily.

It functions in the pathway cofactor biosynthesis; adenosylcobalamin biosynthesis. In terms of biological role, catalyzes amidations at positions B, D, E, and G on adenosylcobyrinic A,C-diamide. NH(2) groups are provided by glutamine, and one molecule of ATP is hydrogenolyzed for each amidation. The sequence is that of Cobyric acid synthase from Crocosphaera subtropica (strain ATCC 51142 / BH68) (Cyanothece sp. (strain ATCC 51142)).